A 326-amino-acid chain; its full sequence is Olfactory receptor 11H2 (326 aa).

Topologically, residues 1–44 (MCPLTLHVTGLMNVSEPNSSFAFVNEFILQGFSCEWTIQIFLFS) are extracellular. N-linked (GlcNAc...) asparagine glycosylation is found at asparagine 13 and asparagine 18. The helical transmembrane segment at 45-65 (LFTTIYALTITGNGAIAFVLW) threads the bilayer. The Cytoplasmic segment spans residues 66–72 (CDRRLHT). Residues 73 to 93 (PMYMFLGNFSFLEIWYVSSTV) form a helical membrane-spanning segment. The Extracellular segment spans residues 94–112 (PKMLVNFLSEKKNISFAGC). Asparagine 106 carries N-linked (GlcNAc...) asparagine glycosylation. Cysteines 112 and 194 form a disulfide. The chain crosses the membrane as a helical span at residues 113 to 133 (FLQFYFFFSLGTSECLLLTVM). Over 134-158 (AFDQYLAICRPLLYPNIMTGHLYAK) the chain is Cytoplasmic. A helical transmembrane segment spans residues 159–179 (LVILCWVCGFLWFLIPIVLIS). At 180-216 (QKPFCGPNIIDHVVCDPGPLFALDCVSAPRIQLFCYT) the chain is on the extracellular side. Residues 217–237 (LSSLVIFGNFLFIIGSYTLVL) traverse the membrane as a helical segment. Residues 238–259 (KAVLGMPSSTGRHKAFSTCGSH) lie on the Cytoplasmic side of the membrane. The helical transmembrane segment at 260–280 (LAVVSLCYSPLMVMYVSPGLG) threads the bilayer. Over 281 to 287 (HSTGMQK) the chain is Extracellular. A helical transmembrane segment spans residues 288–308 (IETLFYAMVTPLFNPLIYSLQ). At 309–326 (NKEIKAALRKVLGSSNII) the chain is on the cytoplasmic side.

The protein belongs to the G-protein coupled receptor 1 family.

The protein resides in the cell membrane. Odorant receptor. The protein is Olfactory receptor 11H2 (OR11H2) of Homo sapiens (Human).